Here is a 327-residue protein sequence, read N- to C-terminus: Phosphate acyltransferase (327 aa).

Belongs to the PlsX family. In terms of assembly, homodimer. Probably interacts with PlsY.

The protein localises to the cytoplasm. It carries out the reaction a fatty acyl-[ACP] + phosphate = an acyl phosphate + holo-[ACP]. The protein operates within lipid metabolism; phospholipid metabolism. Its function is as follows. Catalyzes the reversible formation of acyl-phosphate (acyl-PO(4)) from acyl-[acyl-carrier-protein] (acyl-ACP). This enzyme utilizes acyl-ACP as fatty acyl donor, but not acyl-CoA. This Thermosipho africanus (strain TCF52B) protein is Phosphate acyltransferase.